Here is a 515-residue protein sequence, read N- to C-terminus: NADH-quinone oxidoreductase subunit N (515 aa).

A run of 14 helical transmembrane segments spans residues 14 to 34 (ITPI…EAFL), 40 to 60 (WSAQ…ALAL), 80 to 100 (APTL…ILLI), 138 to 158 (TEVF…CAAN), 160 to 180 (LLTM…MCGL), 195 to 215 (YFLL…LLYG), 239 to 259 (LFAG…VGPF), 271 to 291 (PTAV…GGIL), 307 to 327 (GVLY…GLTQ), 333 to 353 (MIAY…IALT), 361 to 381 (MFYL…ISLV), 404 to 424 (VAWV…TSGF), 438 to 458 (GMAP…FFYL), and 485 to 505 (AAIT…SLAL).

Belongs to the complex I subunit 2 family. NDH-1 is composed of 14 different subunits. Subunits NuoA, H, J, K, L, M, N constitute the membrane sector of the complex.

It localises to the cell membrane. The enzyme catalyses a quinone + NADH + 5 H(+)(in) = a quinol + NAD(+) + 4 H(+)(out). NDH-1 shuttles electrons from NADH, via FMN and iron-sulfur (Fe-S) centers, to quinones in the respiratory chain. The immediate electron acceptor for the enzyme in this species is believed to be a menaquinone. Couples the redox reaction to proton translocation (for every two electrons transferred, four hydrogen ions are translocated across the cytoplasmic membrane), and thus conserves the redox energy in a proton gradient. This Saccharopolyspora erythraea (strain ATCC 11635 / DSM 40517 / JCM 4748 / NBRC 13426 / NCIMB 8594 / NRRL 2338) protein is NADH-quinone oxidoreductase subunit N.